We begin with the raw amino-acid sequence, 52 residues long: Large ribosomal subunit protein bL32c (52 aa).

It belongs to the bacterial ribosomal protein bL32 family.

The protein resides in the plastid. Its subcellular location is the chloroplast. In Eucalyptus globulus subsp. globulus (Tasmanian blue gum), this protein is Large ribosomal subunit protein bL32c.